The chain runs to 195 residues: Probable cobalt-precorrin-6B C(15)-methyltransferase (decarboxylating) (195 aa).

Residues threonine 24, 48–52 (GCGTG), aspartate 72, and alanine 101 contribute to the S-adenosyl-L-methionine site.

It belongs to the methyltransferase superfamily. Archaeal-type CbiT family.

It carries out the reaction Co-precorrin-6B + S-adenosyl-L-methionine = Co-precorrin-7 + S-adenosyl-L-homocysteine + CO2. Its pathway is cofactor biosynthesis; adenosylcobalamin biosynthesis; cob(II)yrinate a,c-diamide from sirohydrochlorin (anaerobic route): step 8/10. Catalyzes the methylation of C-15 in cobalt-precorrin-6B followed by the decarboxylation of C-12 to form cobalt-precorrin-7. This is Probable cobalt-precorrin-6B C(15)-methyltransferase (decarboxylating) from Pyrobaculum calidifontis (strain DSM 21063 / JCM 11548 / VA1).